Consider the following 28-residue polypeptide: Putative antitoxin AF_1079 (28 aa).

Belongs to the UPF0165 family.

Possibly the antitoxin component of a type II toxin-antitoxin (TA) system. The polypeptide is Putative antitoxin AF_1079 (Archaeoglobus fulgidus (strain ATCC 49558 / DSM 4304 / JCM 9628 / NBRC 100126 / VC-16)).